The chain runs to 161 residues: Allophycocyanin alpha chain (161 aa).

Asn-71 bears the N4-methylasparagine mark. Cys-81 is a (2R,3E)-phycocyanobilin binding site.

It belongs to the phycobiliprotein family. In terms of assembly, heterodimer of an alpha and a beta chain. In terms of processing, contains one covalently linked phycocyanobilin chromophore.

The protein resides in the plastid. The protein localises to the chloroplast thylakoid membrane. Functionally, light-harvesting photosynthetic bile pigment-protein from the phycobiliprotein complex. Allophycocyanin has a maximum absorption at approximately 650 nanometers. This Galdieria sulphuraria (Red alga) protein is Allophycocyanin alpha chain (apcA).